The following is a 407-amino-acid chain: MSPVPLKNAERAHSGVRTVSVLGATGSIGDSTMDLIRAEPERYRVEALTGNANVAGLAKLAKEFNARFVAVADPARLGELRAALAGTDVACGAGESAVIEAAARPADWVMAAISGAAGLKPALAAVDRGTTVALANKECLVCAGDFFMSRATAAGAQILPADSEHNALFQALASGNRHELTRVIITASGGPFRTWAAADIEQATLAQALKHPNWSMGQKITIDSASMMNKGLEVIEASYLFALSPDEIDVLVHPQSIVHGLVEFADRSVVAQLGAPDMRIPIAHCLGFPDRITGRAAKLDLAKIGQLTFEAPDFTRFPGLRLAYDALRTGNGATTVYNAANEVAVAAFIAQKIRFGAIARLVEDTLNSWVRAGNQAPLGSADDAIALDQQARNLAATLLPQIAAKAS.

6 residues coordinate NADPH: Thr25, Gly26, Ser27, Ile28, Asn53, and Asn136. Lys137 contributes to the 1-deoxy-D-xylulose 5-phosphate binding site. Residue Glu138 coordinates NADPH. Asp162 contributes to the Mn(2+) binding site. The 1-deoxy-D-xylulose 5-phosphate site is built by Ser163, Glu164, Ser188, and His211. Glu164 is a Mn(2+) binding site. An NADPH-binding site is contributed by Gly217. Ser224, Asn229, Lys230, and Glu233 together coordinate 1-deoxy-D-xylulose 5-phosphate. Glu233 lines the Mn(2+) pocket.

The protein belongs to the DXR family. Mg(2+) is required as a cofactor. Mn(2+) serves as cofactor.

It catalyses the reaction 2-C-methyl-D-erythritol 4-phosphate + NADP(+) = 1-deoxy-D-xylulose 5-phosphate + NADPH + H(+). It participates in isoprenoid biosynthesis; isopentenyl diphosphate biosynthesis via DXP pathway; isopentenyl diphosphate from 1-deoxy-D-xylulose 5-phosphate: step 1/6. Functionally, catalyzes the NADPH-dependent rearrangement and reduction of 1-deoxy-D-xylulose-5-phosphate (DXP) to 2-C-methyl-D-erythritol 4-phosphate (MEP). This Rhodopseudomonas palustris (strain TIE-1) protein is 1-deoxy-D-xylulose 5-phosphate reductoisomerase.